Here is a 431-residue protein sequence, read N- to C-terminus: Histidinol dehydrogenase (431 aa).

Residues Tyr124, Gln187, and Asn210 each coordinate NAD(+). Substrate-binding residues include Ser236, Gln258, and His261. Positions 258 and 261 each coordinate Zn(2+). Active-site proton acceptor residues include Glu325 and His326. Substrate-binding residues include His326, Asp359, Glu413, and His418. Asp359 serves as a coordination point for Zn(2+). Residue His418 participates in Zn(2+) binding.

This sequence belongs to the histidinol dehydrogenase family. It depends on Zn(2+) as a cofactor.

The catalysed reaction is L-histidinol + 2 NAD(+) + H2O = L-histidine + 2 NADH + 3 H(+). Its pathway is amino-acid biosynthesis; L-histidine biosynthesis; L-histidine from 5-phospho-alpha-D-ribose 1-diphosphate: step 9/9. Its function is as follows. Catalyzes the sequential NAD-dependent oxidations of L-histidinol to L-histidinaldehyde and then to L-histidine. The sequence is that of Histidinol dehydrogenase from Legionella pneumophila subsp. pneumophila (strain Philadelphia 1 / ATCC 33152 / DSM 7513).